A 258-amino-acid polypeptide reads, in one-letter code: Ribosomal protein L11 methyltransferase (258 aa).

S-adenosyl-L-methionine is bound by residues Thr117, Gly138, Asp160, and Asn201.

It belongs to the methyltransferase superfamily. PrmA family.

It is found in the cytoplasm. It catalyses the reaction L-lysyl-[protein] + 3 S-adenosyl-L-methionine = N(6),N(6),N(6)-trimethyl-L-lysyl-[protein] + 3 S-adenosyl-L-homocysteine + 3 H(+). Methylates ribosomal protein L11. In Thermosipho melanesiensis (strain DSM 12029 / CIP 104789 / BI429), this protein is Ribosomal protein L11 methyltransferase.